Consider the following 504-residue polypeptide: Glycerol kinase (504 aa).

Thr12 contributes to the ADP binding site. Residues Thr12, Thr13, and Ser14 each coordinate ATP. Thr12 contacts sn-glycerol 3-phosphate. Arg16 provides a ligand contact to ADP. Sn-glycerol 3-phosphate-binding residues include Arg82, Glu83, Tyr134, and Asp246. Residues Arg82, Glu83, Tyr134, Asp246, and Gln247 each coordinate glycerol. ADP contacts are provided by Thr268 and Gly312. Residues Thr268, Gly312, Gln316, and Gly413 each coordinate ATP. Residues Gly413 and Asn417 each contribute to the ADP site.

This sequence belongs to the FGGY kinase family.

It catalyses the reaction glycerol + ATP = sn-glycerol 3-phosphate + ADP + H(+). It functions in the pathway polyol metabolism; glycerol degradation via glycerol kinase pathway; sn-glycerol 3-phosphate from glycerol: step 1/1. Its activity is regulated as follows. Inhibited by fructose 1,6-bisphosphate (FBP). Functionally, key enzyme in the regulation of glycerol uptake and metabolism. Catalyzes the phosphorylation of glycerol to yield sn-glycerol 3-phosphate. The polypeptide is Glycerol kinase (Renibacterium salmoninarum (strain ATCC 33209 / DSM 20767 / JCM 11484 / NBRC 15589 / NCIMB 2235)).